Here is a 342-residue protein sequence, read N- to C-terminus: uncharacterized protein (342 aa).

9–31 (LIFGGTTGIGLMTTIDFIIHNTS) is a binding site for NADP(+). Residue Ser-208 coordinates substrate. Tyr-222 functions as the Proton acceptor in the catalytic mechanism.

Belongs to the short-chain dehydrogenases/reductases (SDR) family.

This is an uncharacterized protein from Acanthamoeba polyphaga (Amoeba).